Here is a 175-residue protein sequence, read N- to C-terminus: VQ motif-containing protein 25 (175 aa).

Residues 50-59 (FRELVQSLTG) carry the VQ motif.

The protein localises to the nucleus. Functionally, may function as negative regulator of plant defense. The sequence is that of VQ motif-containing protein 25 from Arabidopsis thaliana (Mouse-ear cress).